The chain runs to 190 residues: Heme-binding protein 1 (190 aa).

It belongs to the HEBP family. Monomer.

Its subcellular location is the cytoplasm. Its function is as follows. May bind free porphyrinogens that may be present in the cell and thus facilitate removal of these potentially toxic compound. Binds with a high affinity to one molecule of heme or porphyrins. It binds metalloporphyrins, free porphyrins and N-methylprotoporphyrin with similar affinities. In Xenopus laevis (African clawed frog), this protein is Heme-binding protein 1 (hebp1).